A 326-amino-acid polypeptide reads, in one-letter code: Ketol-acid reductoisomerase (NADP(+)) (326 aa).

One can recognise a KARI N-terminal Rossmann domain in the interval 2 to 182 (AKIYGDEDAS…GFTRAGVIKT (181 aa)). Residues 25 to 28 (YGSQ), Arg-48, Ser-53, and 83 to 86 (DEVQ) contribute to the NADP(+) site. The active site involves His-108. Gly-134 contacts NADP(+). A KARI C-terminal knotted domain is found at 183 to 325 (TFREEVETDL…ERLRKMMGFE (143 aa)). Asp-191, Glu-195, Glu-227, and Glu-231 together coordinate Mg(2+). Ser-252 is a binding site for substrate.

Belongs to the ketol-acid reductoisomerase family. It depends on Mg(2+) as a cofactor.

The enzyme catalyses (2R)-2,3-dihydroxy-3-methylbutanoate + NADP(+) = (2S)-2-acetolactate + NADPH + H(+). It carries out the reaction (2R,3R)-2,3-dihydroxy-3-methylpentanoate + NADP(+) = (S)-2-ethyl-2-hydroxy-3-oxobutanoate + NADPH + H(+). It participates in amino-acid biosynthesis; L-isoleucine biosynthesis; L-isoleucine from 2-oxobutanoate: step 2/4. It functions in the pathway amino-acid biosynthesis; L-valine biosynthesis; L-valine from pyruvate: step 2/4. Functionally, involved in the biosynthesis of branched-chain amino acids (BCAA). Catalyzes an alkyl-migration followed by a ketol-acid reduction of (S)-2-acetolactate (S2AL) to yield (R)-2,3-dihydroxy-isovalerate. In the isomerase reaction, S2AL is rearranged via a Mg-dependent methyl migration to produce 3-hydroxy-3-methyl-2-ketobutyrate (HMKB). In the reductase reaction, this 2-ketoacid undergoes a metal-dependent reduction by NADPH to yield (R)-2,3-dihydroxy-isovalerate. The protein is Ketol-acid reductoisomerase (NADP(+)) of Methanopyrus kandleri (strain AV19 / DSM 6324 / JCM 9639 / NBRC 100938).